The following is a 371-amino-acid chain: dTDP-4-amino-4,6-dideoxy-D-glucose transaminase (371 aa).

K186 is subject to N6-(pyridoxal phosphate)lysine.

It belongs to the DegT/DnrJ/EryC1 family. Requires pyridoxal 5'-phosphate as cofactor.

It catalyses the reaction dTDP-4-amino-4,6-dideoxy-D-glucose + 2-oxoglutarate = dTDP-4-dehydro-6-deoxy-alpha-D-glucose + L-glutamate. Its pathway is bacterial outer membrane biogenesis; lipopolysaccharide biosynthesis. Its function is as follows. Catalyzes the conversion of dTDP-4-dehydro-6-deoxy-D-glucose (dTDP-D-Glc4O) to dTDP-4-amino-4,6-dideoxy-D-glucose (dTDP-D-Qui4N). This Escherichia coli protein is dTDP-4-amino-4,6-dideoxy-D-glucose transaminase (vioA).